The primary structure comprises 131 residues: Small ribosomal subunit protein uS11 (131 aa).

This sequence belongs to the universal ribosomal protein uS11 family. As to quaternary structure, part of the 30S ribosomal subunit. Interacts with proteins S7 and S18. Binds to IF-3.

Functionally, located on the platform of the 30S subunit, it bridges several disparate RNA helices of the 16S rRNA. Forms part of the Shine-Dalgarno cleft in the 70S ribosome. This is Small ribosomal subunit protein uS11 from Paramagnetospirillum magneticum (strain ATCC 700264 / AMB-1) (Magnetospirillum magneticum).